Here is a 652-residue protein sequence, read N- to C-terminus: uncharacterized protein (652 aa).

Positions 1 to 13 (MSVTESKAKTERK) are enriched in basic and acidic residues. A disordered region spans residues 1–21 (MSVTESKAKTERKSSRKPAKT).

It belongs to the ParB family.

This is an uncharacterized protein from Escherichia coli (strain K12).